The sequence spans 215 residues: Protein Syd (215 aa).

Belongs to the Syd family.

It localises to the cell inner membrane. Its function is as follows. Interacts with the SecY protein in vivo. May bind preferentially to an uncomplexed state of SecY, thus functioning either as a chelating agent for excess SecY in the cell or as a regulatory factor that negatively controls the translocase function. This is Protein Syd from Shewanella piezotolerans (strain WP3 / JCM 13877).